We begin with the raw amino-acid sequence, 784 residues long: LPS-assembly protein LptD (784 aa).

An N-terminal signal peptide occupies residues 1-24 (MKKRIPTLLATMIASALYSHQGLA). 2 disulfide bridges follow: C31–C724 and C173–C725.

Belongs to the LptD family. As to quaternary structure, component of the lipopolysaccharide transport and assembly complex. Interacts with LptE and LptA. Contains two intramolecular disulfide bonds.

It is found in the cell outer membrane. Its function is as follows. Together with LptE, is involved in the assembly of lipopolysaccharide (LPS) at the surface of the outer membrane. The protein is LPS-assembly protein LptD of Salmonella paratyphi A (strain ATCC 9150 / SARB42).